Consider the following 258-residue polypeptide: Isoprenyl transferase (258 aa).

Residue Asp38 is part of the active site. Asp38 contacts Mg(2+). Residues 39 to 42 (GNGR), Trp43, Arg51, His55, and 83 to 85 (STE) each bind substrate. The Proton acceptor role is filled by Asn86. Substrate-binding positions include Trp87, Arg89, Arg206, and 212 to 214 (RIS). Glu225 lines the Mg(2+) pocket.

Belongs to the UPP synthase family. In terms of assembly, homodimer. Requires Mg(2+) as cofactor.

Its function is as follows. Catalyzes the condensation of isopentenyl diphosphate (IPP) with allylic pyrophosphates generating different type of terpenoids. The sequence is that of Isoprenyl transferase from Bacillus thuringiensis subsp. konkukian (strain 97-27).